The chain runs to 1024 residues: Multidrug resistance protein MdtC (1024 aa).

Helical transmembrane passes span 12–32, 333–353, 360–380, 387–407, 435–455, 469–489, 528–548, 853–873, 875–895, 897–917, 953–973, and 984–1004; these read VATTLLTLAITLSGIIGFSLL, EVERSLVIAVALVILVVFIFL, LIPAVAVPVSLIGTFAAMYLC, LSLMALTIATGFVVDDAIVVL, VLSMSISLVAVFIPLLLMAGL, VAIGISLVISLTLTPMMCAWL, WVMVVLLSTIALNVWLYISIP, LWLIMAAIATVYIVLGILYES, VHPLTILSTLPSAGVGALLAL, LFDAPFSLIALIGIMLLIGIV, PIIMTTLAALFGALPLVLSSG, and ITIVGGLVVSQLLTLYTTPVI.

Belongs to the resistance-nodulation-cell division (RND) (TC 2.A.6) family. MdtC subfamily. As to quaternary structure, part of a tripartite efflux system composed of MdtA, MdtB and MdtC. MdtC forms a heteromultimer with MdtB.

The protein resides in the cell inner membrane. The chain is Multidrug resistance protein MdtC from Yersinia pseudotuberculosis serotype O:1b (strain IP 31758).